A 925-amino-acid polypeptide reads, in one-letter code: Coronin-7 (925 aa).

4 WD repeats span residues 75-115 (CHSD…QALP), 124-163 (PEDLPVEVLQFHPTSDGILVSAAGTTVKVWDAAKQQPLTE), 166-205 (AHGDLVQSAVWSRDGALVGTACKDKQLRIFDPRTKPQASQ), and 209-253 (AHEN…SALA). Disordered regions lie at residues 196–216 (DPRTKPQASQSTQAHENSRDS) and 399–465 (LVPP…SLQS). The segment covering 201–210 (PQASQSTQAH) has biased composition (polar residues). The segment covering 429–460 (SSPPSSLTSPSTPSSLGPTLSSTSGIGTGPSL) has biased composition (low complexity). Residues Ser-462 and Ser-465 each carry the phosphoserine modification. Residue Lys-472 forms a Glycyl lysine isopeptide (Lys-Gly) (interchain with G-Cter in ubiquitin) linkage. 3 WD repeats span residues 542-582 (QNGA…LEEV), 592-632 (GHME…DRLK), and 635-674 (GHQDQIFSLAWSPDGQQLATVCKDGRVRVYRPRSGPEPLQ). Lys-680 is covalently cross-linked (Glycyl lysine isopeptide (Lys-Gly) (interchain with G-Cter in ubiquitin)). Residues 728–768 (DVAPSTLVPSYEPRHWPGAPDWQGDARVFLYELLPESPFFM) form a WD 8 repeat. The interval 857–925 (LQPPDMSPVS…FEGVDEDEWD (69 aa)) is disordered. Low complexity predominate over residues 866–882 (SQAPREAPARRAPSSAQ). The span at 884-896 (LEEKSDQQKKEEL) shows a compositional bias: basic and acidic residues. Ser-915 is subject to Phosphoserine.

It belongs to the WD repeat coronin family. Interacts with clathrin adapter AP1 complex. This interaction takes place at Golgi membranes and not AP1-positive endosomal membranes. Interacts (when ubiquitinated at Lys-472) with EPS15. The membrane-associated form is phosphorylated on tyrosine residues. In terms of processing, ubiquitinated via 'Lys-33'-linked ubiquitin chains by the BCR(KLHL20) E3 ubiquitin ligase complex: 'Lys-33'-linked ubiquitination promotes interaction with EPS15 and facilitates actin polymerization at the trans-Golgi network, thereby facilitating post-Golgi trafficking. Deubiquitinated by ZRANB1/TRABID.

It is found in the golgi apparatus membrane. The protein localises to the golgi apparatus. The protein resides in the trans-Golgi network. It localises to the cytoplasmic vesicle. Its subcellular location is the cytoplasm. It is found in the cytosol. F-actin regulator involved in anterograde Golgi to endosome transport: upon ubiquitination via 'Lys-33'-linked ubiquitin chains by the BCR(KLHL20) E3 ubiquitin ligase complex, interacts with EPS15 and localizes to the trans-Golgi network, where it promotes actin polymerization, thereby facilitating post-Golgi trafficking. May play a role in the maintenance of the Golgi apparatus morphology. This Pongo abelii (Sumatran orangutan) protein is Coronin-7 (CORO7).